The following is a 329-amino-acid chain: Elongation factor Ts (329 aa).

An involved in Mg(2+) ion dislocation from EF-Tu region spans residues 79-82; it reads TDFV.

It belongs to the EF-Ts family.

It is found in the cytoplasm. Its function is as follows. Associates with the EF-Tu.GDP complex and induces the exchange of GDP to GTP. It remains bound to the aminoacyl-tRNA.EF-Tu.GTP complex up to the GTP hydrolysis stage on the ribosome. The sequence is that of Elongation factor Ts from Parabacteroides distasonis (strain ATCC 8503 / DSM 20701 / CIP 104284 / JCM 5825 / NCTC 11152).